The following is a 45-amino-acid chain: Protamine Z2 (45 aa).

Residues 1-23 (MKCGRKRRRRRRHACKRKKRACK) show a composition bias toward basic residues. Residues 1 to 26 (MKCGRKRRRRRRHACKRKKRACKQRS) form a disordered region.

As to expression, testis.

It is found in the nucleus. The protein resides in the chromosome. Protamines substitute for histones in the chromatin of sperm during the haploid phase of spermatogenesis. They compact sperm DNA into a highly condensed, stable and inactive complex. The sequence is that of Protamine Z2 from Scyliorhinus canicula (Small-spotted catshark).